A 549-amino-acid chain; its full sequence is Glucose-6-phosphate isomerase (549 aa).

Glutamate 353 acts as the Proton donor in catalysis. Catalysis depends on residues histidine 384 and lysine 510.

Belongs to the GPI family.

It is found in the cytoplasm. It carries out the reaction alpha-D-glucose 6-phosphate = beta-D-fructose 6-phosphate. It participates in carbohydrate biosynthesis; gluconeogenesis. The protein operates within carbohydrate degradation; glycolysis; D-glyceraldehyde 3-phosphate and glycerone phosphate from D-glucose: step 2/4. In terms of biological role, catalyzes the reversible isomerization of glucose-6-phosphate to fructose-6-phosphate. This is Glucose-6-phosphate isomerase from Mycolicibacterium smegmatis (strain ATCC 700084 / mc(2)155) (Mycobacterium smegmatis).